Here is a 138-residue protein sequence, read N- to C-terminus: ATP synthase epsilon chain (138 aa).

It belongs to the ATPase epsilon chain family. F-type ATPases have 2 components, CF(1) - the catalytic core - and CF(0) - the membrane proton channel. CF(1) has five subunits: alpha(3), beta(3), gamma(1), delta(1), epsilon(1). CF(0) has three main subunits: a, b and c.

It localises to the cell inner membrane. Its function is as follows. Produces ATP from ADP in the presence of a proton gradient across the membrane. The protein is ATP synthase epsilon chain of Wigglesworthia glossinidia brevipalpis.